The primary structure comprises 91 residues: Acylphosphatase (91 aa).

The Acylphosphatase-like domain occupies 3-91 (HIKVNVKGQV…TELTKFEVKY (89 aa)). Residues Arg18 and Asn36 contribute to the active site.

Belongs to the acylphosphatase family.

It carries out the reaction an acyl phosphate + H2O = a carboxylate + phosphate + H(+). This Oceanobacillus iheyensis (strain DSM 14371 / CIP 107618 / JCM 11309 / KCTC 3954 / HTE831) protein is Acylphosphatase (acyP).